Consider the following 347-residue polypeptide: NADH-ubiquinone oxidoreductase chain 2 (347 aa).

9 helical membrane-spanning segments follow: residues 3-23, 59-79, 89-109, 150-170, 178-198, 201-221, 237-257, 276-296, and 326-346; these read PMTF…VMMS, YFLT…INLL, LINP…LGLA, NLNI…WGGL, IMAY…MYNP, MLLN…LLMI, LPLI…LPPL, IILS…YTRI, and LPLM…TAIL.

Belongs to the complex I subunit 2 family. As to quaternary structure, core subunit of respiratory chain NADH dehydrogenase (Complex I) which is composed of 45 different subunits. Interacts with TMEM242.

Its subcellular location is the mitochondrion inner membrane. The catalysed reaction is a ubiquinone + NADH + 5 H(+)(in) = a ubiquinol + NAD(+) + 4 H(+)(out). Functionally, core subunit of the mitochondrial membrane respiratory chain NADH dehydrogenase (Complex I) which catalyzes electron transfer from NADH through the respiratory chain, using ubiquinone as an electron acceptor. Essential for the catalytic activity and assembly of complex I. The sequence is that of NADH-ubiquinone oxidoreductase chain 2 from Nyctophilus arnhemensis (Northern long-eared bat).